Reading from the N-terminus, the 144-residue chain is Large ribosomal subunit protein uL16 (144 aa).

This sequence belongs to the universal ribosomal protein uL16 family. Part of the 50S ribosomal subunit.

Functionally, binds 23S rRNA and is also seen to make contacts with the A and possibly P site tRNAs. In Halothermothrix orenii (strain H 168 / OCM 544 / DSM 9562), this protein is Large ribosomal subunit protein uL16.